The primary structure comprises 185 residues: Elongation factor P (185 aa).

This sequence belongs to the elongation factor P family.

It is found in the cytoplasm. The protein operates within protein biosynthesis; polypeptide chain elongation. Its function is as follows. Involved in peptide bond synthesis. Stimulates efficient translation and peptide-bond synthesis on native or reconstituted 70S ribosomes in vitro. Probably functions indirectly by altering the affinity of the ribosome for aminoacyl-tRNA, thus increasing their reactivity as acceptors for peptidyl transferase. This Limosilactobacillus reuteri (strain DSM 20016) (Lactobacillus reuteri) protein is Elongation factor P.